A 470-amino-acid polypeptide reads, in one-letter code: UDP-N-acetylmuramate--L-alanine ligase (470 aa).

118 to 124 provides a ligand contact to ATP; it reads GTHGKTT.

This sequence belongs to the MurCDEF family.

It is found in the cytoplasm. The enzyme catalyses UDP-N-acetyl-alpha-D-muramate + L-alanine + ATP = UDP-N-acetyl-alpha-D-muramoyl-L-alanine + ADP + phosphate + H(+). It participates in cell wall biogenesis; peptidoglycan biosynthesis. In terms of biological role, cell wall formation. The sequence is that of UDP-N-acetylmuramate--L-alanine ligase from Cereibacter sphaeroides (strain KD131 / KCTC 12085) (Rhodobacter sphaeroides).